We begin with the raw amino-acid sequence, 250 residues long: 4-hydroxy-tetrahydrodipicolinate reductase (250 aa).

Residues 10–15 (GARGRI), 78–80 (GTT), and 105–108 (APNF) each bind NAD(+). His135 (proton donor/acceptor) is an active-site residue. His136 lines the (S)-2,3,4,5-tetrahydrodipicolinate pocket. The active-site Proton donor is Lys139. 145–146 (GT) contacts (S)-2,3,4,5-tetrahydrodipicolinate. The tract at residues 158 to 177 (RAEAGSAPQPDATTTALDGA) is disordered.

This sequence belongs to the DapB family.

Its subcellular location is the cytoplasm. It catalyses the reaction (S)-2,3,4,5-tetrahydrodipicolinate + NAD(+) + H2O = (2S,4S)-4-hydroxy-2,3,4,5-tetrahydrodipicolinate + NADH + H(+). It carries out the reaction (S)-2,3,4,5-tetrahydrodipicolinate + NADP(+) + H2O = (2S,4S)-4-hydroxy-2,3,4,5-tetrahydrodipicolinate + NADPH + H(+). It functions in the pathway amino-acid biosynthesis; L-lysine biosynthesis via DAP pathway; (S)-tetrahydrodipicolinate from L-aspartate: step 4/4. In terms of biological role, catalyzes the conversion of 4-hydroxy-tetrahydrodipicolinate (HTPA) to tetrahydrodipicolinate. This is 4-hydroxy-tetrahydrodipicolinate reductase from Streptomyces griseus subsp. griseus (strain JCM 4626 / CBS 651.72 / NBRC 13350 / KCC S-0626 / ISP 5235).